A 203-amino-acid chain; its full sequence is Glycerol-3-phosphate acyltransferase (203 aa).

A run of 4 helical transmembrane segments spans residues 4-24, 68-88, 117-137, and 155-175; these read LALI…AVLI, IPVW…VIAI, PIGL…AVLF, and TWMF…LIVF.

This sequence belongs to the PlsY family. As to quaternary structure, probably interacts with PlsX.

Its subcellular location is the cell inner membrane. The enzyme catalyses an acyl phosphate + sn-glycerol 3-phosphate = a 1-acyl-sn-glycero-3-phosphate + phosphate. The protein operates within lipid metabolism; phospholipid metabolism. Catalyzes the transfer of an acyl group from acyl-phosphate (acyl-PO(4)) to glycerol-3-phosphate (G3P) to form lysophosphatidic acid (LPA). This enzyme utilizes acyl-phosphate as fatty acyl donor, but not acyl-CoA or acyl-ACP. The protein is Glycerol-3-phosphate acyltransferase of Vibrio campbellii (strain ATCC BAA-1116).